A 72-amino-acid polypeptide reads, in one-letter code: Disintegrin cereberin (72 aa).

The 72-residue stretch at 1-72 (EAGEECDCGS…SADCPRNRFH (72 aa)) folds into the Disintegrin domain. Disulfide bonds link C6–C21, C8–C16, C15–C38, C29–C35, C34–C59, and C47–C66. The short motif at 51–53 (RGD) is the Cell attachment site element. The segment at 51-72 (RGDNPDDRCTGQSADCPRNRFH) is disordered.

Belongs to the venom metalloproteinase (M12B) family. P-II subfamily. P-IIa sub-subfamily. Monomer (disintegrin). In terms of tissue distribution, expressed by the venom gland.

It localises to the secreted. Its function is as follows. Inhibits fibrinogen interaction with platelet. Acts by binding to alpha-IIb/beta-3 (ITGA2B/ITGB3) on the platelet surface and inhibits aggregation induced by ADP, thrombin, platelet-activating factor and collagen. In Crotalus cerberus (Arizona black rattlesnake), this protein is Disintegrin cereberin.